A 396-amino-acid polypeptide reads, in one-letter code: MAEVETFLFTSESVNEGHPDKLCDQISDAVLDACLAEDPDSKVACETCTKTNMVMVFGEITTKANVDYEKIVRDTCRGIGFVSNDVGLDADHCKVLVNIEQQSPDIAQGVHGHFTKRPEEIGAGDQGHMFGYATDETPEFMPLSHVLATKLGARLTEVRKNATCPWLRPDGKTQVTVEYHNDNGAMVPIRVHTVLISTQHDETVTNDEIAADLKEHVIKPVIPEQYLDENTIFHLNPSGRFVIGGPHGDAGLTGRKIIIDTYGGWGAHGGGAFSGKDPTKVDRSGAYIARQAAKSIVASGIARRCIVQVSYAIGVPEPLSVFVDTYGTGKIPDKEILEIVKENFDFRPGMIIINLDLKRGGSGRYLKTAAYGHFGRDGADFTWEVVKPLKWEKPSA.

Position 12 (Glu-12) interacts with Mg(2+). His-18 lines the ATP pocket. Glu-46 provides a ligand contact to K(+). L-methionine contacts are provided by Glu-59 and Gln-102. ATP contacts are provided by residues 170-172, 238-241, Asp-249, 255-256, Ala-272, Lys-276, and Lys-280; these read DGK, SGRF, and RK. An L-methionine-binding site is contributed by Asp-249. Residue Lys-280 participates in L-methionine binding.

Belongs to the AdoMet synthase family. Homotetramer. Mn(2+) is required as a cofactor. The cofactor is Mg(2+). It depends on Co(2+) as a cofactor. Requires K(+) as cofactor.

The protein localises to the cytoplasm. It carries out the reaction L-methionine + ATP + H2O = S-adenosyl-L-methionine + phosphate + diphosphate. Its pathway is amino-acid biosynthesis; S-adenosyl-L-methionine biosynthesis; S-adenosyl-L-methionine from L-methionine: step 1/1. Functionally, catalyzes the formation of S-adenosylmethionine from methionine and ATP. The reaction comprises two steps that are both catalyzed by the same enzyme: formation of S-adenosylmethionine (AdoMet) and triphosphate, and subsequent hydrolysis of the triphosphate. This chain is S-adenosylmethionine synthase 4 (SAM4), found in Hordeum vulgare (Barley).